Reading from the N-terminus, the 133-residue chain is Small ribosomal subunit protein uS8 (133 aa).

It belongs to the universal ribosomal protein uS8 family. Part of the 30S ribosomal subunit.

Functionally, one of the primary rRNA binding proteins, it binds directly to 16S rRNA central domain where it helps coordinate assembly of the platform of the 30S subunit. The protein is Small ribosomal subunit protein uS8 of Desulfurococcus amylolyticus (strain DSM 18924 / JCM 16383 / VKM B-2413 / 1221n) (Desulfurococcus kamchatkensis).